A 197-amino-acid polypeptide reads, in one-letter code: Tyrosine-protein phosphatase-like protein OCA2 (197 aa).

A Tyrosine-protein phosphatase domain is found at 10–160 (SPVVSTDVSL…FETNLKIPRN (151 aa)). Ser-181 carries the post-translational modification Phosphoserine.

Belongs to the protein-tyrosine phosphatase family.

The protein resides in the cytoplasm. Its function is as follows. Required for normal growth in the presence of linoleic acid hydroperoxide (LoaOOH). This Saccharomyces cerevisiae (strain ATCC 204508 / S288c) (Baker's yeast) protein is Tyrosine-protein phosphatase-like protein OCA2 (OCA2).